The sequence spans 97 residues: Exodeoxyribonuclease 7 small subunit (97 aa).

A disordered region spans residues 1–22 (MAKTASPGDTAAGNGTEPLPDK).

Belongs to the XseB family. Heterooligomer composed of large and small subunits.

The protein resides in the cytoplasm. It carries out the reaction Exonucleolytic cleavage in either 5'- to 3'- or 3'- to 5'-direction to yield nucleoside 5'-phosphates.. Its function is as follows. Bidirectionally degrades single-stranded DNA into large acid-insoluble oligonucleotides, which are then degraded further into small acid-soluble oligonucleotides. This Burkholderia vietnamiensis (strain G4 / LMG 22486) (Burkholderia cepacia (strain R1808)) protein is Exodeoxyribonuclease 7 small subunit.